A 393-amino-acid chain; its full sequence is S-adenosylmethionine synthase 2 (393 aa).

A Mg(2+)-binding site is contributed by Glu-9. Position 15 (His-15) interacts with ATP. Glu-43 contributes to the K(+) binding site. Glu-56 and Gln-99 together coordinate L-methionine. ATP contacts are provided by residues 167-169 (DGK), 235-238 (SGRF), Asp-246, 252-253 (RK), Ala-269, Lys-273, and Lys-277. Position 246 (Asp-246) interacts with L-methionine. An L-methionine-binding site is contributed by Lys-277.

Belongs to the AdoMet synthase family. In terms of assembly, homotetramer. It depends on Mn(2+) as a cofactor. The cofactor is Mg(2+). Co(2+) is required as a cofactor. Requires K(+) as cofactor. Mostly expressed in flowers, seedpods and roots, and, to a lower extent, in stems and leaves.

The protein localises to the cytoplasm. It catalyses the reaction L-methionine + ATP + H2O = S-adenosyl-L-methionine + phosphate + diphosphate. It functions in the pathway amino-acid biosynthesis; S-adenosyl-L-methionine biosynthesis; S-adenosyl-L-methionine from L-methionine: step 1/1. Catalyzes the formation of S-adenosylmethionine from methionine and ATP. The reaction comprises two steps that are both catalyzed by the same enzyme: formation of S-adenosylmethionine (AdoMet) and triphosphate, and subsequent hydrolysis of the triphosphate. This is S-adenosylmethionine synthase 2 (MSAMS2) from Brassica juncea (Indian mustard).